Reading from the N-terminus, the 122-residue chain is MYKYLFCLALIGCACADNINKDAQIRSFQNDATDAEGNYQYAYETSNGIQIQEAGNANGARGAVAYVSPEGEHISLTYTADEEGYHPVGDHLPTPPPVPAYVLRALEYIRTHPPAPAQKEQQ.

The first 16 residues, 1 to 16 (MYKYLFCLALIGCACA), serve as a signal peptide directing secretion. The region spanning 36–96 (EGNYQYAYET…PVGDHLPTPP (61 aa)) is the Chitin-binding type R&amp;R domain.

In terms of tissue distribution, imaginal (anterior) epidermis.

Component of the cuticle of the pupa of fruit fly. The sequence is that of Pupal cuticle protein Edg-78E (Edg78E) from Drosophila melanogaster (Fruit fly).